Consider the following 199-residue polypeptide: Protein GrpE (199 aa).

The segment at 1-50 (MAKKSTRTTPEDSQASTTDSAATSTASEATQAATSATDDQAEQTTAVDPT) is disordered. A compositionally biased stretch (low complexity) spans 11-46 (EDSQASTTDSAATSTASEATQAATSATDDQAEQTTA).

It belongs to the GrpE family. As to quaternary structure, homodimer.

The protein localises to the cytoplasm. Its function is as follows. Participates actively in the response to hyperosmotic and heat shock by preventing the aggregation of stress-denatured proteins, in association with DnaK and GrpE. It is the nucleotide exchange factor for DnaK and may function as a thermosensor. Unfolded proteins bind initially to DnaJ; upon interaction with the DnaJ-bound protein, DnaK hydrolyzes its bound ATP, resulting in the formation of a stable complex. GrpE releases ADP from DnaK; ATP binding to DnaK triggers the release of the substrate protein, thus completing the reaction cycle. Several rounds of ATP-dependent interactions between DnaJ, DnaK and GrpE are required for fully efficient folding. This chain is Protein GrpE, found in Lactiplantibacillus plantarum (strain ATCC BAA-793 / NCIMB 8826 / WCFS1) (Lactobacillus plantarum).